Reading from the N-terminus, the 454-residue chain is Guanine deaminase (454 aa).

The Zn(2+) site is built by H82 and H84. Substrate is bound by residues 84 to 87, 213 to 214, 240 to 243, and D330; these read HAPQ, RF, and HISE. Residues H240 and D330 each contribute to the Zn(2+) site. Residue S453 is modified to Phosphoserine.

Belongs to the metallo-dependent hydrolases superfamily. ATZ/TRZ family. In terms of assembly, homodimer. Zn(2+) is required as a cofactor.

The enzyme catalyses guanine + H2O + H(+) = xanthine + NH4(+). It functions in the pathway purine metabolism; guanine degradation; xanthine from guanine: step 1/1. Functionally, catalyzes the hydrolytic deamination of guanine, producing xanthine and ammonia. The protein is Guanine deaminase (Gda) of Rattus norvegicus (Rat).